Here is a 443-residue protein sequence, read N- to C-terminus: Endonuclease CUE2 (443 aa).

CUE domains are found at residues 8-51 and 55-98; these read DHES…KEND and TVDN…NYET. The region spanning 347-443 is the Smr domain; it reads LDFHGFLPSE…YFRIEGKKKK (97 aa).

Its function is as follows. mRNA endonuclease involved in the No-Go Decay (NGD) pathway, which catalyzes mRNA cleavage and degradation in response to ribosome collisions. Acts downstream of the ribosome collision sensor HEL2. Specifically recognizes and binds RPS7/eS7 polyubiquitinated by MOT2/NOT4 and HEL2, promoting CUE2 recruitment to stalled ribosomes, where it mediates mRNA cleavage upstream of the colliding ribosome. Also mediates mRNA cleavage within colliding ribosomes: recruited to colliding ribosomes downstream of the RQT (ribosome quality control trigger) complex following disassembly of stalled ribosomes and cleaves mRNAs partially released from the colliding ribosome. The protein is Endonuclease CUE2 of Saccharomyces cerevisiae (strain ATCC 204508 / S288c) (Baker's yeast).